The following is a 407-amino-acid chain: Altered inheritance of mitochondria protein 6 (407 aa).

Residues 1–23 (MNGVKSWTVTLVFYFLILAVLIA) form the signal peptide.

It belongs to the AIM6 family.

In Zygosaccharomyces rouxii (strain ATCC 2623 / CBS 732 / NBRC 1130 / NCYC 568 / NRRL Y-229), this protein is Altered inheritance of mitochondria protein 6 (AIM6).